A 205-amino-acid chain; its full sequence is Outer-membrane lipoprotein LolB (205 aa).

The N-terminal stretch at 1–17 (MFLRHCITFTLIALLAG) is a signal peptide. C18 carries the N-palmitoyl cysteine lipid modification. A lipid anchor (S-diacylglycerol cysteine) is attached at C18.

Belongs to the LolB family. In terms of assembly, monomer.

The protein resides in the cell outer membrane. Its function is as follows. Plays a critical role in the incorporation of lipoproteins in the outer membrane after they are released by the LolA protein. This Pseudomonas putida (strain W619) protein is Outer-membrane lipoprotein LolB.